The primary structure comprises 101 residues: Small ribosomal subunit protein uS14 (101 aa).

This sequence belongs to the universal ribosomal protein uS14 family. In terms of assembly, part of the 30S ribosomal subunit. Contacts proteins S3 and S10.

Its function is as follows. Binds 16S rRNA, required for the assembly of 30S particles and may also be responsible for determining the conformation of the 16S rRNA at the A site. The polypeptide is Small ribosomal subunit protein uS14 (Escherichia coli O8 (strain IAI1)).